A 202-amino-acid chain; its full sequence is Imidazoleglycerol-phosphate dehydratase (202 aa).

It belongs to the imidazoleglycerol-phosphate dehydratase family.

It is found in the cytoplasm. It carries out the reaction D-erythro-1-(imidazol-4-yl)glycerol 3-phosphate = 3-(imidazol-4-yl)-2-oxopropyl phosphate + H2O. Its pathway is amino-acid biosynthesis; L-histidine biosynthesis; L-histidine from 5-phospho-alpha-D-ribose 1-diphosphate: step 6/9. This is Imidazoleglycerol-phosphate dehydratase from Sinorhizobium fredii (strain NBRC 101917 / NGR234).